A 115-amino-acid chain; its full sequence is Large ribosomal subunit protein bL19 (115 aa).

The protein belongs to the bacterial ribosomal protein bL19 family.

Functionally, this protein is located at the 30S-50S ribosomal subunit interface and may play a role in the structure and function of the aminoacyl-tRNA binding site. This chain is Large ribosomal subunit protein bL19, found in Streptococcus pyogenes serotype M2 (strain MGAS10270).